Here is a 215-residue protein sequence, read N- to C-terminus: 3-demethoxyubiquinol 3-hydroxylase (215 aa).

Residues glutamate 64, glutamate 94, histidine 97, glutamate 146, glutamate 178, and histidine 181 each coordinate Fe cation.

The protein belongs to the COQ7 family. Requires Fe cation as cofactor.

It is found in the cell membrane. It catalyses the reaction a 5-methoxy-2-methyl-3-(all-trans-polyprenyl)benzene-1,4-diol + AH2 + O2 = a 3-demethylubiquinol + A + H2O. Its pathway is cofactor biosynthesis; ubiquinone biosynthesis. Functionally, catalyzes the hydroxylation of 2-nonaprenyl-3-methyl-6-methoxy-1,4-benzoquinol during ubiquinone biosynthesis. The polypeptide is 3-demethoxyubiquinol 3-hydroxylase (Pseudomonas fluorescens (strain Pf0-1)).